We begin with the raw amino-acid sequence, 382 residues long: uncharacterized protein (382 aa).

The next 11 helical transmembrane spans lie at 8-28 (VLLL…LNTL), 41-61 (WQVG…TLIA), 73-93 (SYHC…LTVD), 94-114 (FWSW…IWVI), 133-153 (AAYM…LGIV), 157-177 (LLSV…PLLF), 208-228 (GCII…LYLS), 235-255 (ASVG…QWPM), 274-294 (VVIL…ALFI), 325-345 (ALLM…SLLM), and 349-369 (SDNL…MMLL).

It belongs to the major facilitator superfamily. YcaD (TC 2.A.1.26) family.

The protein localises to the cell inner membrane. This is an uncharacterized protein from Yersinia pseudotuberculosis serotype IB (strain PB1/+).